The following is a 130-amino-acid chain: uncharacterized protein (130 aa).

The interval 1–62 (MRMYSSDAHE…ASGVGSSCKR (62 aa)) is disordered. Residues 21 to 30 (PPHPLPPTGS) are compositionally biased toward pro residues.

This is an uncharacterized protein from Homo sapiens (Human).